The following is a 400-amino-acid chain: Exodeoxyribonuclease 7 large subunit (400 aa).

This sequence belongs to the XseA family. Heterooligomer composed of large and small subunits.

The protein resides in the cytoplasm. The enzyme catalyses Exonucleolytic cleavage in either 5'- to 3'- or 3'- to 5'-direction to yield nucleoside 5'-phosphates.. Functionally, bidirectionally degrades single-stranded DNA into large acid-insoluble oligonucleotides, which are then degraded further into small acid-soluble oligonucleotides. This chain is Exodeoxyribonuclease 7 large subunit, found in Clostridium novyi (strain NT).